The sequence spans 651 residues: Acetyl-coenzyme A synthetase (651 aa).

CoA contacts are provided by residues 189 to 192 (RGGK), threonine 311, and asparagine 335. ATP-binding positions include 387-389 (GEP), 411-416 (DTWWQT), aspartate 500, and arginine 515. Serine 523 serves as a coordination point for CoA. Arginine 526 is a binding site for ATP. Mg(2+) is bound by residues valine 537, histidine 539, and valine 542. Arginine 584 contacts CoA. Position 609 is an N6-acetyllysine (lysine 609).

It belongs to the ATP-dependent AMP-binding enzyme family. The cofactor is Mg(2+). In terms of processing, acetylated. Deacetylation by the SIR2-homolog deacetylase activates the enzyme.

It carries out the reaction acetate + ATP + CoA = acetyl-CoA + AMP + diphosphate. Its function is as follows. Catalyzes the conversion of acetate into acetyl-CoA (AcCoA), an essential intermediate at the junction of anabolic and catabolic pathways. AcsA undergoes a two-step reaction. In the first half reaction, AcsA combines acetate with ATP to form acetyl-adenylate (AcAMP) intermediate. In the second half reaction, it can then transfer the acetyl group from AcAMP to the sulfhydryl group of CoA, forming the product AcCoA. This Agrobacterium fabrum (strain C58 / ATCC 33970) (Agrobacterium tumefaciens (strain C58)) protein is Acetyl-coenzyme A synthetase.